Reading from the N-terminus, the 200-residue chain is Ras-related protein Rab-10 (200 aa).

Residues S18, G19, V20, G21, K22, T23, C24, N35, T36, S40, and T41 each contribute to the GTP site. T23 serves as a coordination point for Mg(2+). 2 short sequence motifs (switch) span residues 32–46 (DAFN…GIDF) and 64–81 (DTAG…YYRG). Residues T41 and D64 each coordinate Mg(2+). G67, N122, K123, D125, M126, S152, A153, and K154 together coordinate GTP. Positions 181–200 (RENVDISTTGGGTGLKKCCS) are disordered. Residues C198 and C199 are each lipidated (S-geranylgeranyl cysteine).

The protein belongs to the small GTPase superfamily. Rab family. The cofactor is Mg(2+).

It localises to the cytoplasmic vesicle membrane. The protein resides in the golgi apparatus. Its subcellular location is the trans-Golgi network membrane. It is found in the endosome membrane. The protein localises to the recycling endosome membrane. It localises to the cytoplasmic vesicle. The protein resides in the phagosome membrane. Its subcellular location is the cell projection. It is found in the cilium. The protein localises to the endoplasmic reticulum membrane. It catalyses the reaction GTP + H2O = GDP + phosphate + H(+). Regulated by guanine nucleotide exchange factors (GEFs) which promote the exchange of bound GDP for free GTP. Regulated by GTPase activating proteins (GAPs) which increase the GTP hydrolysis activity. Inhibited by GDP dissociation inhibitors (GDIs) which prevent Rab-GDP dissociation. Its function is as follows. The small GTPases Rab are key regulators of intracellular membrane trafficking, from the formation of transport vesicles to their fusion with membranes. Rabs cycle between an inactive GDP-bound form and an active GTP-bound form that is able to recruit to membranes different set of downstream effectors directly responsible for vesicle formation, movement, tethering and fusion. That Rab is mainly involved in the biosynthetic transport of proteins from the Golgi to the plasma membrane. Also plays a specific role in asymmetric protein transport to the plasma membrane within the polarized neuron and epithelial cells. In neurons, it is involved in axonogenesis through regulation of vesicular membrane trafficking toward the axonal plasma membrane while in epithelial cells, it regulates transport from the Golgi to the basolateral membrane. Moreover, may play a role in the basolateral recycling pathway and in phagosome maturation. Finally, may play a role in endoplasmic reticulum dynamics and morphology controlling tubulation along microtubules and tubules fusion. May participate in the export of neosynthesized proteins through a Rab-dependent endosomal export route. The sequence is that of Ras-related protein Rab-10 from Diplobatis ommata (Ocellated electric ray).